Here is a 152-residue protein sequence, read N- to C-terminus: Ribosome maturation factor RimP (152 aa).

This sequence belongs to the RimP family.

The protein resides in the cytoplasm. Functionally, required for maturation of 30S ribosomal subunits. The chain is Ribosome maturation factor RimP from Elusimicrobium minutum (strain Pei191).